Here is a 442-residue protein sequence, read N- to C-terminus: Methionine aminopeptidase 2-1 (442 aa).

A disordered region spans residues Met-1–Tyr-92. A compositionally biased stretch (polar residues) spans Asn-15–Val-25. Acidic residues predominate over residues Glu-30–Gly-47. Basic residues predominate over residues Ala-56–Ala-72. Residue His-195 participates in substrate binding. A divalent metal cation contacts are provided by Asp-215, Asp-226, and His-295. Residue His-303 coordinates substrate. 2 residues coordinate a divalent metal cation: Glu-328 and Glu-423.

It belongs to the peptidase M24A family. Methionine aminopeptidase eukaryotic type 2 subfamily. It depends on Co(2+) as a cofactor. Zn(2+) serves as cofactor. Requires Mn(2+) as cofactor. The cofactor is Fe(2+).

It is found in the cytoplasm. The enzyme catalyses Release of N-terminal amino acids, preferentially methionine, from peptides and arylamides.. In terms of biological role, cotranslationally removes the N-terminal methionine from nascent proteins. The N-terminal methionine is often cleaved when the second residue in the primary sequence is small and uncharged (Met-Ala-, Cys, Gly, Pro, Ser, Thr, or Val). The protein is Methionine aminopeptidase 2-1 of Talaromyces marneffei (strain ATCC 18224 / CBS 334.59 / QM 7333) (Penicillium marneffei).